Reading from the N-terminus, the 991-residue chain is Regulator of telomere elongation helicase 1 homolog (991 aa).

One can recognise a Helicase ATP-binding domain in the interval N7–L319. S42 to T49 contacts ATP. Positions 148, 166, 175, and 211 each coordinate [4Fe-4S] cluster. Residues D254–H257 carry the DEAH box motif. The segment at S812–G833 is disordered.

It belongs to the helicase family. RAD3/XPD subfamily.

It is found in the nucleus. It carries out the reaction ATP + H2O = ADP + phosphate + H(+). Its function is as follows. A probable ATP-dependent DNA helicase implicated in DNA repair and the maintenance of genomic stability. Acts as an anti-recombinase to counteract toxic recombination and limit crossover during meiosis. Regulates meiotic recombination and crossover homeostasis by physically dissociating strand invasion events and thereby promotes noncrossover repair by meiotic synthesis dependent strand annealing (SDSA) as well as disassembly of D loop recombination intermediates. The polypeptide is Regulator of telomere elongation helicase 1 homolog (Anopheles gambiae (African malaria mosquito)).